Here is a 169-residue protein sequence, read N- to C-terminus: Peptide deformylase (169 aa).

Fe cation is bound by residues C91 and H133. E134 is a catalytic residue. H137 is a binding site for Fe cation.

Belongs to the polypeptide deformylase family. Fe(2+) is required as a cofactor.

The enzyme catalyses N-terminal N-formyl-L-methionyl-[peptide] + H2O = N-terminal L-methionyl-[peptide] + formate. In terms of biological role, removes the formyl group from the N-terminal Met of newly synthesized proteins. Requires at least a dipeptide for an efficient rate of reaction. N-terminal L-methionine is a prerequisite for activity but the enzyme has broad specificity at other positions. The protein is Peptide deformylase of Serratia proteamaculans (strain 568).